Consider the following 77-residue polypeptide: Short neurotoxin OH-32 (77 aa).

The first 21 residues, methionine 1–threonine 21, serve as a signal peptide directing secretion. Disulfide bonds link cysteine 24–cysteine 40, cysteine 33–cysteine 58, cysteine 62–cysteine 70, and cysteine 71–cysteine 76.

It belongs to the three-finger toxin family. Short-chain subfamily. As to expression, expressed by the venom gland.

The protein localises to the secreted. Its function is as follows. This three-finger toxin binds and inhibits the nicotinic acetylcholine receptor (nAChR). This Ophiophagus hannah (King cobra) protein is Short neurotoxin OH-32.